The chain runs to 177 residues: Large ribosomal subunit protein uL6 (177 aa).

This sequence belongs to the universal ribosomal protein uL6 family. In terms of assembly, part of the 50S ribosomal subunit.

This protein binds to the 23S rRNA, and is important in its secondary structure. It is located near the subunit interface in the base of the L7/L12 stalk, and near the tRNA binding site of the peptidyltransferase center. This is Large ribosomal subunit protein uL6 from Rickettsia peacockii (strain Rustic).